The sequence spans 213 residues: Ribonuclease HII (213 aa).

The RNase H type-2 domain maps to 1–213 (MKIIGIDEAG…SWKTAQKFIQ (213 aa)). The a divalent metal cation site is built by Asp7, Glu8, and Asp105.

Belongs to the RNase HII family. Mn(2+) is required as a cofactor. Mg(2+) serves as cofactor.

Its subcellular location is the cytoplasm. The catalysed reaction is Endonucleolytic cleavage to 5'-phosphomonoester.. Functionally, endonuclease that specifically degrades the RNA of RNA-DNA hybrids. This Methanococcoides burtonii (strain DSM 6242 / NBRC 107633 / OCM 468 / ACE-M) protein is Ribonuclease HII.